The sequence spans 74 residues: Protein krueppel (74 aa).

4 consecutive C2H2-type zinc fingers follow at residues 1–4, 10–32, 38–60, and 66–74; these read ERTH, FECSQCHKRFTRDHHLKTHMRLH, YHCTHCDRHFVQVANLRRHLRVH, and YACELCASR.

This sequence belongs to the krueppel C2H2-type zinc-finger protein family.

The protein localises to the nucleus. Functionally, krueppel is a gap class segmentation protein. This Euscelis plebejus (Leafhopper) protein is Protein krueppel (Kr).